Here is a 325-residue protein sequence, read N- to C-terminus: MNLAFIPSPSTGVIELGPIPLRGYAFCIIIGVFVAVWFGNKRWVARGGKAGTVADVAVWAVPFGLVGGRLYHVITDYQLYFSDGEDWVDAFKIWEGGLGIWGAIAFGAVGAWIACRRRGIPLPAWADALAPGIAIAQAIGRWGNWFNQELYGKPTDLPWALEISEGPNRVAGTYHPTFLYESLWCIGVALLVIWADRRFKLGHGRAFALYVAGYCAGRGWIEYMRVDEAHHILGLRLNVWTAIVVFILAVVYIVISAKIRPGREEIVEPDRDATPAEKDGSGEDGSGEKGVAKADAAAKDPLTKDEPGKDATAENAGAAGAAEKA.

The next 4 helical transmembrane spans lie at 19–39, 47–67, 93–113, and 119–139; these read IPLR…VWFG, GGKA…GLVG, IWEG…GAWI, and GIPL…AQAI. Position 141 (Arg-141) interacts with a 1,2-diacyl-sn-glycero-3-phospho-(1'-sn-glycerol). The next 3 helical transmembrane spans lie at 175–195, 207–225, and 237–257; these read HPTF…VIWA, FALY…EYMR, and LNVW…VISA. The segment covering 266 to 312 has biased composition (basic and acidic residues); it reads IVEPDRDATPAEKDGSGEDGSGEKGVAKADAAAKDPLTKDEPGKDAT. Residues 266 to 325 form a disordered region; it reads IVEPDRDATPAEKDGSGEDGSGEKGVAKADAAAKDPLTKDEPGKDATAENAGAAGAAEKA. Positions 313-325 are enriched in low complexity; that stretch reads AENAGAAGAAEKA.

This sequence belongs to the Lgt family.

It localises to the cell membrane. The catalysed reaction is L-cysteinyl-[prolipoprotein] + a 1,2-diacyl-sn-glycero-3-phospho-(1'-sn-glycerol) = an S-1,2-diacyl-sn-glyceryl-L-cysteinyl-[prolipoprotein] + sn-glycerol 1-phosphate + H(+). It functions in the pathway protein modification; lipoprotein biosynthesis (diacylglyceryl transfer). Its function is as follows. Catalyzes the transfer of the diacylglyceryl group from phosphatidylglycerol to the sulfhydryl group of the N-terminal cysteine of a prolipoprotein, the first step in the formation of mature lipoproteins. The protein is Phosphatidylglycerol--prolipoprotein diacylglyceryl transferase of Streptomyces griseus subsp. griseus (strain JCM 4626 / CBS 651.72 / NBRC 13350 / KCC S-0626 / ISP 5235).